The following is a 235-amino-acid chain: uncharacterized protein (235 aa).

An ABC transporter domain is found at 2–235; sequence IKLKNVTKTY…EEKLRGFDDR (234 aa). 38–45 is a binding site for ATP; sequence GPSGSGKS.

This sequence belongs to the ABC transporter superfamily.

This is an uncharacterized protein from Methanocaldococcus jannaschii (strain ATCC 43067 / DSM 2661 / JAL-1 / JCM 10045 / NBRC 100440) (Methanococcus jannaschii).